A 355-amino-acid chain; its full sequence is Protein FIP1 (355 aa).

The next 4 membrane-spanning stretches (helical) occupy residues 42 to 62, 72 to 92, 113 to 133, and 149 to 169; these read YLYM…PWMF, LLCC…QYFV, VVRL…LVIV, and IIML…IGYV. Positions 220 to 337 form a coiled coil; it reads LHFLSEEILC…RMSNSELQKE (118 aa). The span at 331–340 shows a compositional bias: basic and acidic residues; the sequence is NSELQKEVAS. Positions 331–355 are disordered; the sequence is NSELQKEVASTRRKQMLETTTSEQP.

Belongs to the TMEM192 family. Interacts with FRI.

It localises to the membrane. This Arabidopsis thaliana (Mouse-ear cress) protein is Protein FIP1.